A 180-amino-acid chain; its full sequence is Isopentenyl-diphosphate Delta-isomerase (180 aa).

The Mn(2+) site is built by histidine 29 and histidine 36. Cysteine 71 is an active-site residue. Histidine 73 is a binding site for Mn(2+). Glutamate 91 provides a ligand contact to Mg(2+). 2 residues coordinate Mn(2+): glutamate 118 and glutamate 120. Glutamate 120 is a catalytic residue.

This sequence belongs to the IPP isomerase type 1 family. Mg(2+) is required as a cofactor. Mn(2+) serves as cofactor.

It is found in the cytoplasm. The enzyme catalyses isopentenyl diphosphate = dimethylallyl diphosphate. It participates in isoprenoid biosynthesis; dimethylallyl diphosphate biosynthesis; dimethylallyl diphosphate from isopentenyl diphosphate: step 1/1. Catalyzes the 1,3-allylic rearrangement of the homoallylic substrate isopentenyl (IPP) to its highly electrophilic allylic isomer, dimethylallyl diphosphate (DMAPP). This is Isopentenyl-diphosphate Delta-isomerase from Kocuria rhizophila (strain ATCC 9341 / DSM 348 / NBRC 103217 / DC2201).